The sequence spans 477 residues: PTS system glucose-specific EIICB component (477 aa).

Residues 1 to 388 (MFKNVFSSLQ…FNLKTPGREE (388 aa)) form the PTS EIIC type-1 domain. 9 consecutive transmembrane segments (helical) span residues 20–40 (VSVL…FTLI), 51–71 (TGGS…ALGF), 76–96 (GVAA…LSAV), 112–132 (NFSD…AYMF), 152–172 (FVPI…SLIW), 250–270 (LSGG…AIWH), 280–300 (IGSI…TEPI), 304–324 (FILV…LSFP), and 354–374 (IFLF…IFYF). A PTS EIIB type-1 domain is found at 399 to 477 (IEIAPYIVEA…TAIDEYINNI (79 aa)). The active-site Phosphocysteine intermediate; for EIIB activity is the C421. C421 bears the Phosphocysteine mark.

The protein localises to the cell inner membrane. The enzyme catalyses N(pros)-phospho-L-histidyl-[protein] + D-glucose(out) = D-glucose 6-phosphate(in) + L-histidyl-[protein]. The phosphoenolpyruvate-dependent sugar phosphotransferase system (sugar PTS), a major carbohydrate active transport system, catalyzes the phosphorylation of incoming sugar substrates concomitantly with their translocation across the cell membrane. The enzyme II complex composed of PtsG and Crr is involved in glucose transport. This chain is PTS system glucose-specific EIICB component (ptsG), found in Buchnera aphidicola subsp. Schizaphis graminum (strain Sg).